Consider the following 608-residue polypeptide: MCGIVGILGREPVAEQLVDSLKRLEYRGYDSAGVATLEGRHLERRRAEGKLKNLEKRLEAEPLKGTTGIGHTRWATHGKPTVNNAHPHATERVAVVHNGIIENFRELREELEKNGTVFHTETDTEIVLHLVDDLLTRGNKPVEAVKLALARLRGAFALGFIFAGDNDLMIGARNGPPLAIGYGDGEMYLGSDAIALGPFTDTISYLEDGDWVVLTRNSATIFDKDGHAVQREKIKHAASTSLVDKANYRHFMAKEIHEQPEVVGHTLARYVDMATERVSLPVKLPFDFKNIQRINITACGTASYAGFVAKYWFERFARLPVEVDVASEFRYREAPLRKGDLAIFISQSGETADTLAALRYAKAEGVHTVAVVNVPTSTIARESETVLPTLAGPEIGVASTKAFTCQLMVLANLAIAAGKARGELSDEDETKLVHGLVEIPRLMSDALTTELQIEKLAREIAKSRDVLYLGRGTSFPLALEGALKLKEISYIHAEGYAAGELKHGPIALIDETMPVVVIAPYDRVFEKTVSNMQEVAARGGKIILMTDAKGAEEATVESLVTIVMPDMAAAFTPMVYAVPVQLLAYHTAVIMGTDVDQPRNLAKSVTVE.

The active-site Nucleophile; for GATase activity is Cys-2. A Glutamine amidotransferase type-2 domain is found at 2-217 (CGIVGILGRE…DGDWVVLTRN (216 aa)). SIS domains follow at residues 284-423 (LPFD…ARGE) and 456-598 (LARE…VDQP). Lys-603 (for Fru-6P isomerization activity) is an active-site residue.

In terms of assembly, homodimer.

The protein localises to the cytoplasm. It carries out the reaction D-fructose 6-phosphate + L-glutamine = D-glucosamine 6-phosphate + L-glutamate. In terms of biological role, catalyzes the first step in hexosamine metabolism, converting fructose-6P into glucosamine-6P using glutamine as a nitrogen source. The sequence is that of Glutamine--fructose-6-phosphate aminotransferase [isomerizing] (glmS) from Bradyrhizobium diazoefficiens (strain JCM 10833 / BCRC 13528 / IAM 13628 / NBRC 14792 / USDA 110).